The chain runs to 145 residues: D-aminoacyl-tRNA deacylase (145 aa).

Residues 137 to 138 (GP) carry the Gly-cisPro motif, important for rejection of L-amino acids motif.

Belongs to the DTD family. Homodimer.

The protein resides in the cytoplasm. The enzyme catalyses glycyl-tRNA(Ala) + H2O = tRNA(Ala) + glycine + H(+). It carries out the reaction a D-aminoacyl-tRNA + H2O = a tRNA + a D-alpha-amino acid + H(+). In terms of biological role, an aminoacyl-tRNA editing enzyme that deacylates mischarged D-aminoacyl-tRNAs. Also deacylates mischarged glycyl-tRNA(Ala), protecting cells against glycine mischarging by AlaRS. Acts via tRNA-based rather than protein-based catalysis; rejects L-amino acids rather than detecting D-amino acids in the active site. By recycling D-aminoacyl-tRNA to D-amino acids and free tRNA molecules, this enzyme counteracts the toxicity associated with the formation of D-aminoacyl-tRNA entities in vivo and helps enforce protein L-homochirality. The polypeptide is D-aminoacyl-tRNA deacylase (Photorhabdus laumondii subsp. laumondii (strain DSM 15139 / CIP 105565 / TT01) (Photorhabdus luminescens subsp. laumondii)).